Here is a 346-residue protein sequence, read N- to C-terminus: Phosphoribosylformylglycinamidine cyclo-ligase (346 aa).

The protein belongs to the AIR synthase family.

It localises to the cytoplasm. It carries out the reaction 2-formamido-N(1)-(5-O-phospho-beta-D-ribosyl)acetamidine + ATP = 5-amino-1-(5-phospho-beta-D-ribosyl)imidazole + ADP + phosphate + H(+). It participates in purine metabolism; IMP biosynthesis via de novo pathway; 5-amino-1-(5-phospho-D-ribosyl)imidazole from N(2)-formyl-N(1)-(5-phospho-D-ribosyl)glycinamide: step 2/2. This chain is Phosphoribosylformylglycinamidine cyclo-ligase, found in Bacillus mycoides (strain KBAB4) (Bacillus weihenstephanensis).